Reading from the N-terminus, the 130-residue chain is Small ribosomal subunit protein uS11 (130 aa).

Belongs to the universal ribosomal protein uS11 family. Part of the 30S ribosomal subunit. Interacts with proteins S7 and S18. Binds to IF-3.

Located on the platform of the 30S subunit, it bridges several disparate RNA helices of the 16S rRNA. Forms part of the Shine-Dalgarno cleft in the 70S ribosome. The protein is Small ribosomal subunit protein uS11 of Prochlorococcus marinus (strain MIT 9515).